A 212-amino-acid polypeptide reads, in one-letter code: Pyridoxine/pyridoxamine 5'-phosphate oxidase (212 aa).

Substrate-binding positions include 7–10 and lysine 66; that span reads RREY. FMN is bound by residues 61–66, 76–77, lysine 83, and glutamine 105; these read RIVLLK and YT. Substrate-binding residues include tyrosine 123, arginine 127, and serine 131. Residues 140–141 and tryptophan 185 each bind FMN; that span reads QS. 191-193 is a substrate binding site; sequence RLH. Arginine 195 lines the FMN pocket.

The protein belongs to the pyridoxamine 5'-phosphate oxidase family. In terms of assembly, homodimer. It depends on FMN as a cofactor.

It carries out the reaction pyridoxamine 5'-phosphate + O2 + H2O = pyridoxal 5'-phosphate + H2O2 + NH4(+). The catalysed reaction is pyridoxine 5'-phosphate + O2 = pyridoxal 5'-phosphate + H2O2. It functions in the pathway cofactor metabolism; pyridoxal 5'-phosphate salvage; pyridoxal 5'-phosphate from pyridoxamine 5'-phosphate: step 1/1. The protein operates within cofactor metabolism; pyridoxal 5'-phosphate salvage; pyridoxal 5'-phosphate from pyridoxine 5'-phosphate: step 1/1. Its function is as follows. Catalyzes the oxidation of either pyridoxine 5'-phosphate (PNP) or pyridoxamine 5'-phosphate (PMP) into pyridoxal 5'-phosphate (PLP). This Idiomarina loihiensis (strain ATCC BAA-735 / DSM 15497 / L2-TR) protein is Pyridoxine/pyridoxamine 5'-phosphate oxidase.